Consider the following 294-residue polypeptide: Phosphatidylserine decarboxylase proenzyme (294 aa).

Catalysis depends on charge relay system; for autoendoproteolytic cleavage activity residues Asp113, His169, and Ser256. The active-site Schiff-base intermediate with substrate; via pyruvic acid; for decarboxylase activity is Ser256. Ser256 is subject to Pyruvic acid (Ser); by autocatalysis.

Belongs to the phosphatidylserine decarboxylase family. PSD-B subfamily. Prokaryotic type II sub-subfamily. In terms of assembly, heterodimer of a large membrane-associated beta subunit and a small pyruvoyl-containing alpha subunit. The cofactor is pyruvate. Post-translationally, is synthesized initially as an inactive proenzyme. Formation of the active enzyme involves a self-maturation process in which the active site pyruvoyl group is generated from an internal serine residue via an autocatalytic post-translational modification. Two non-identical subunits are generated from the proenzyme in this reaction, and the pyruvate is formed at the N-terminus of the alpha chain, which is derived from the carboxyl end of the proenzyme. The autoendoproteolytic cleavage occurs by a canonical serine protease mechanism, in which the side chain hydroxyl group of the serine supplies its oxygen atom to form the C-terminus of the beta chain, while the remainder of the serine residue undergoes an oxidative deamination to produce ammonia and the pyruvoyl prosthetic group on the alpha chain. During this reaction, the Ser that is part of the protease active site of the proenzyme becomes the pyruvoyl prosthetic group, which constitutes an essential element of the active site of the mature decarboxylase.

It is found in the cell membrane. It carries out the reaction a 1,2-diacyl-sn-glycero-3-phospho-L-serine + H(+) = a 1,2-diacyl-sn-glycero-3-phosphoethanolamine + CO2. Its pathway is phospholipid metabolism; phosphatidylethanolamine biosynthesis; phosphatidylethanolamine from CDP-diacylglycerol: step 2/2. In terms of biological role, catalyzes the formation of phosphatidylethanolamine (PtdEtn) from phosphatidylserine (PtdSer). This chain is Phosphatidylserine decarboxylase proenzyme, found in Clostridium perfringens (strain SM101 / Type A).